We begin with the raw amino-acid sequence, 672 residues long: 2,4-dienoyl-CoA reductase [(2E)-enoyl-CoA-producing] (672 aa).

FMN contacts are provided by residues 25-27 (SMH), Gly59, and Gln101. Tyr167 functions as the Proton donor in the catalytic mechanism. A substrate-binding site is contributed by Arg176. Arg215 is an FMN binding site. A substrate-binding site is contributed by 253–256 (HEAR). Residues Arg289 and 311–312 (AR) contribute to the FMN site. Residues Cys335 and Cys338 each coordinate [4Fe-4S] cluster. Gln340 provides a ligand contact to FAD. Gln340 serves as a coordination point for NADP(+). Cys342 and Cys354 together coordinate [4Fe-4S] cluster. FAD-binding residues include Ala385, Asp404, Gln412, Lys422, and Val449. Residue 563–564 (RK) participates in NADP(+) binding. Residues Lys567 and Trp578 each contribute to the substrate site. Residues Gly649 and 656 to 658 (LDA) each bind FAD. NADP(+) is bound at residue 654 to 656 (MEL).

The protein in the N-terminal section; belongs to the NADH:flavin oxidoreductase/NADH oxidase family. As to quaternary structure, monomer. FMN is required as a cofactor. Requires FAD as cofactor. The cofactor is [4Fe-4S] cluster.

It catalyses the reaction a 4,5-saturated-(2E)-enoyl-CoA + NADP(+) = a (2E,4E)-dienoyl-CoA + NADPH + H(+). The enzyme catalyses a (2E,4Z)-dienoyl-CoA + NADPH + H(+) = a 4,5-saturated-(2E)-enoyl-CoA + NADP(+). It carries out the reaction (2E)-decenoyl-CoA + NADP(+) = (2E,4E)-decadienoyl-CoA + NADPH + H(+). The catalysed reaction is (2E)-decenoyl-CoA + NADP(+) = (2E,4Z)-decadienoyl-CoA + NADPH + H(+). It participates in lipid metabolism; fatty acid beta-oxidation. With respect to regulation, is non-competitively inhibited by NADH. Functions as an auxiliary enzyme in the beta-oxidation of unsaturated fatty acids with double bonds at even carbon positions. Catalyzes the NADPH-dependent reduction of the C4-C5 double bond of the acyl chain of 2,4-dienoyl-CoA to yield 2-trans-enoyl-CoA. Acts on both isomers, 2-trans,4-cis- and 2-trans,4-trans-decadienoyl-CoA, with almost equal efficiency. Is not active with NADH instead of NADPH. Does not show cis-&gt;trans isomerase activity. This is 2,4-dienoyl-CoA reductase [(2E)-enoyl-CoA-producing] from Escherichia coli (strain K12).